The primary structure comprises 389 residues: Chalcone synthase (389 aa).

Cys164 is a catalytic residue.

It belongs to the thiolase-like superfamily. Chalcone/stilbene synthases family.

It catalyses the reaction (E)-4-coumaroyl-CoA + 3 malonyl-CoA + 3 H(+) = 2',4,4',6'-tetrahydroxychalcone + 3 CO2 + 4 CoA. It functions in the pathway secondary metabolite biosynthesis; flavonoid biosynthesis. Its function is as follows. The primary product of this enzyme is 4,2',4',6'-tetrahydroxychalcone (also termed naringenin-chalcone or chalcone) which can under specific conditions spontaneously isomerize into naringenin. This chain is Chalcone synthase (CHS), found in Pueraria montana var. lobata (Kudzu vine).